Reading from the N-terminus, the 132-residue chain is Glycerol-3-phosphate cytidylyltransferase (132 aa).

CTP contacts are provided by residues 9 to 10 and 14 to 17; these read TY and HYGH. Substrate is bound at residue Lys-44. Lys-46 is a CTP binding site. Lys-77 contacts substrate. 113 to 120 is a CTP binding site; it reads RTEGISTT.

The protein belongs to the cytidylyltransferase family. Homotetramer or homodimer.

The protein localises to the cytoplasm. It carries out the reaction sn-glycerol 3-phosphate + CTP + H(+) = CDP-glycerol + diphosphate. Its pathway is cell wall biogenesis; poly(ribitol phosphate) teichoic acid biosynthesis. Catalyzes the transfer of the cytidylyl group of CTP to sn-glycerol 3-phosphate so the activated glycerol 3-phosphate can be used for teichoic acid synthesis, via incorporation into both the linkage unit by TarB and TarF. The polypeptide is Glycerol-3-phosphate cytidylyltransferase (Staphylococcus aureus (strain NCTC 8325 / PS 47)).